Reading from the N-terminus, the 243-residue chain is Ice-binding protein K1-A (243 aa).

The first 20 residues, M1–A20, serve as a signal peptide directing secretion.

This sequence belongs to the ice-binding protein family.

It localises to the secreted. Binds to the surface of ice crystals. Inhibits growth of the ice crystals. Has antifreeze activity for survival under snow cover. Has high thermal hysteresis (TH) activity, which is the ability to lower the freezing point of an aqueous solution below its melting point, and thus the freezing of the cell fluid can be prevented protecting the organism from ice damage. The TH activity of this protein is 2.0 degrees Celsius at 0.11 mM. The sequence is that of Ice-binding protein K1-A from Typhula ishikariensis (Gray snow mold fungus).